The sequence spans 838 residues: Polyribonucleotide nucleotidyltransferase (838 aa).

Aspartate 494 and aspartate 500 together coordinate Mg(2+). A KH domain is found at 561–620 (PRMESMLIDKGKIKNVIGAGGKNVREICEKTGAKIEISQDGTVMIYAVGREAIESAKDMI). An S1 motif domain is found at 630-697 (GKIYSGEVCE…DKDHIQLSMR (68 aa)). Residues 747-757 (GGASAGRNGRG) show a composition bias toward gly residues. Positions 747–838 (GGASAGRNGR…PAAPKKPRFF (92 aa)) are disordered. A compositionally biased stretch (low complexity) spans 788 to 810 (AGSSGYSSDSSSGNTKSSSSESS). Residues 811-820 (GGTGGRGRNG) are compositionally biased toward gly residues.

The protein belongs to the polyribonucleotide nucleotidyltransferase family. It depends on Mg(2+) as a cofactor.

It is found in the cytoplasm. It catalyses the reaction RNA(n+1) + phosphate = RNA(n) + a ribonucleoside 5'-diphosphate. Its function is as follows. Involved in mRNA degradation. Catalyzes the phosphorolysis of single-stranded polyribonucleotides processively in the 3'- to 5'-direction. The protein is Polyribonucleotide nucleotidyltransferase of Anaplasma phagocytophilum (strain HZ).